The following is a 268-amino-acid chain: Lipopolysaccharide core heptose(I) kinase WaaP (268 aa).

Phosphotyrosine; by autocatalysis occurs at positions 30, 48, and 98. The active site involves Asp163. Phosphotyrosine; by autocatalysis is present on residues Tyr165, Tyr211, Tyr231, Tyr258, and Tyr264.

The protein belongs to the protein kinase superfamily. KdkA/RfaP family. In terms of assembly, interacts with acyl-AcpP. The WaaP hydrophobic channel can accommodate acyl chains of different lengths, but myristyl-ACP is likely its physiological binding partner. It depends on Mg(2+) as a cofactor.

Its subcellular location is the cytoplasm. The catalysed reaction is an L-alpha-D-Hep-(1-&gt;3)-L-alpha-D-Hep-(1-&gt;5)-[alpha-Kdo-(2-&gt;4)]-alpha-Kdo-(2-&gt;6)-lipid A + ATP = an L-alpha-D-Hep-(1-&gt;3)-4-O-phospho-L-alpha-D-Hep-(1-&gt;5)-[alpha-Kdo-(2-&gt;4)]-alpha-Kdo-(2-&gt;6)-lipid A + ADP + H(+). It catalyses the reaction L-tyrosyl-[protein] + ATP = O-phospho-L-tyrosyl-[protein] + ADP + H(+). Its pathway is bacterial outer membrane biogenesis; LPS core biosynthesis. With respect to regulation, acylated-acyl carrier protein (acyl-ACP) acts as a very tightly bound cofactor necessary for the production and stability of active WaaP kinase. Functionally, kinase involved in the biosynthesis of the core oligosaccharide region of lipopolysaccharide (LPS). Catalyzes the phosphorylation of heptose I (HepI), the first heptose added to the Kdo2-lipid A module. Also has protein-tyrosine kinase activity: autophosphorylates on all Tyr residues; in vitro can phosphorylate poly(Glu,Tyr). In Pseudomonas aeruginosa (strain ATCC 15692 / DSM 22644 / CIP 104116 / JCM 14847 / LMG 12228 / 1C / PRS 101 / PAO1), this protein is Lipopolysaccharide core heptose(I) kinase WaaP.